Consider the following 390-residue polypeptide: MTADQELQIIVRQGKEPNPTVQDERNSVSSSQAEVSHSNTYKRWLRVTLYTFFVISGQTVATILGRVYYDNGGNSKWLATVVQLVGFPVLLPYYILSFKTHATTDRDGKRTSPRNRVLVYVVLGLLVGADCYLYSIGLLYLPVSTYSLICASQLAFNAFFSYFLNSQKLTPIILNSLFLLTISSTLLAFNNEETDSTKVTKGEYVKGFICTVAASAGYGLVLSLQQLAFLKVLKKQNFSEVMDMIIYVSLVASCVSVVGLFASSEWKTLSSEMDNYKHGKVSYIMNLVWTAVTWQVFSIGGTGLIFELSSLFSNAISVLGLPVVPILAVIIFHDKMNGLKVISMILAIWGFTSYVYQQYLDDKNLKKNHEITTTESPDPPEAEESTWQSK.

10 helical membrane passes run 44–64, 78–98, 117–137, 140–160, 169–189, 204–224, 241–261, 287–307, 312–332, and 336–356; these read WLRV…ATIL, LATV…ILSF, VLVY…YSIG, YLPV…NAFF, LTPI…LLAF, YVKG…VLSL, VMDM…VGLF, LVWT…LIFE, FSNA…VIIF, and MNGL…SYVY. The tract at residues 370–390 is disordered; the sequence is EITTTESPDPPEAEESTWQSK.

The protein belongs to the purine permeases (TC 2.A.7.14) family.

Its subcellular location is the membrane. The chain is Probable purine permease 10 (PUP10) from Arabidopsis thaliana (Mouse-ear cress).